The sequence spans 538 residues: Cytochrome P450 monooxygenase verH (538 aa).

The chain crosses the membrane as a helical span at residues 2-21 (VFAMLVVCWSIFLGLWMLVS). Heme is bound at residue cysteine 445.

The protein belongs to the cytochrome P450 family. Heme serves as cofactor.

It localises to the membrane. The protein operates within secondary metabolite biosynthesis; terpenoid biosynthesis. It participates in mycotoxin biosynthesis. Functionally, cytochrome P450 monooxygenase; part of the gene cluster that mediates the biosynthesis of the neurotoxin verrucosidin, a methylated alpha-pyrone polyketide that inhibits oxidative phosphorylation in mitochondria and thereby causes neurological diseases. The carbon backbone of verrucosidin is synthesized by the HR-PKS verA, and further modified by the other verrucodidin cluster enzymes. The protein is Cytochrome P450 monooxygenase verH of Penicillium polonicum.